Reading from the N-terminus, the 371-residue chain is Histidinol-phosphate aminotransferase (371 aa).

The residue at position 228 (Lys228) is an N6-(pyridoxal phosphate)lysine.

The protein belongs to the class-II pyridoxal-phosphate-dependent aminotransferase family. Histidinol-phosphate aminotransferase subfamily. Requires pyridoxal 5'-phosphate as cofactor.

The catalysed reaction is L-histidinol phosphate + 2-oxoglutarate = 3-(imidazol-4-yl)-2-oxopropyl phosphate + L-glutamate. Its pathway is amino-acid biosynthesis; L-histidine biosynthesis; L-histidine from 5-phospho-alpha-D-ribose 1-diphosphate: step 7/9. In Methanococcus maripaludis (strain C7 / ATCC BAA-1331), this protein is Histidinol-phosphate aminotransferase.